The following is a 299-amino-acid chain: Probable 4-deoxy-4-formamido-L-arabinose-phosphoundecaprenol deformylase ArnD (299 aa).

A NodB homology domain is found at 2-263; sequence IDVGLRIDVD…EASARGIRFV (262 aa).

This sequence belongs to the polysaccharide deacetylase family. ArnD deformylase subfamily.

The enzyme catalyses 4-deoxy-4-formamido-alpha-L-arabinopyranosyl di-trans,octa-cis-undecaprenyl phosphate + H2O = 4-amino-4-deoxy-alpha-L-arabinopyranosyl di-trans,octa-cis-undecaprenyl phosphate + formate. It functions in the pathway glycolipid biosynthesis; 4-amino-4-deoxy-alpha-L-arabinose undecaprenyl phosphate biosynthesis; 4-amino-4-deoxy-alpha-L-arabinose undecaprenyl phosphate from UDP-4-deoxy-4-formamido-beta-L-arabinose and undecaprenyl phosphate: step 2/2. It participates in bacterial outer membrane biogenesis; lipopolysaccharide biosynthesis. Catalyzes the deformylation of 4-deoxy-4-formamido-L-arabinose-phosphoundecaprenol to 4-amino-4-deoxy-L-arabinose-phosphoundecaprenol. The modified arabinose is attached to lipid A and is required for resistance to polymyxin and cationic antimicrobial peptides. The protein is Probable 4-deoxy-4-formamido-L-arabinose-phosphoundecaprenol deformylase ArnD of Aeromonas salmonicida (strain A449).